The primary structure comprises 283 residues: Formamidopyrimidine-DNA glycosylase (283 aa).

Pro2 functions as the Schiff-base intermediate with DNA in the catalytic mechanism. Residue Glu3 is the Proton donor of the active site. The active-site Proton donor; for beta-elimination activity is the Lys61. Positions 94, 113, and 159 each coordinate DNA. Residues 245-279 form an FPG-type zinc finger; that stretch reads DAYGREGESCRRCGAVMRREKFMNRSSFYCPKCQP. The Proton donor; for delta-elimination activity role is filled by Arg269.

Belongs to the FPG family. In terms of assembly, monomer. It depends on Zn(2+) as a cofactor.

The catalysed reaction is Hydrolysis of DNA containing ring-opened 7-methylguanine residues, releasing 2,6-diamino-4-hydroxy-5-(N-methyl)formamidopyrimidine.. It carries out the reaction 2'-deoxyribonucleotide-(2'-deoxyribose 5'-phosphate)-2'-deoxyribonucleotide-DNA = a 3'-end 2'-deoxyribonucleotide-(2,3-dehydro-2,3-deoxyribose 5'-phosphate)-DNA + a 5'-end 5'-phospho-2'-deoxyribonucleoside-DNA + H(+). Its function is as follows. Involved in base excision repair of DNA damaged by oxidation or by mutagenic agents. Acts as a DNA glycosylase that recognizes and removes damaged bases. Has a preference for oxidized purines, such as 7,8-dihydro-8-oxoguanine (8-oxoG). Has AP (apurinic/apyrimidinic) lyase activity and introduces nicks in the DNA strand. Cleaves the DNA backbone by beta-delta elimination to generate a single-strand break at the site of the removed base with both 3'- and 5'-phosphates. This chain is Formamidopyrimidine-DNA glycosylase, found in Mycobacterium avium (strain 104).